The following is a 304-amino-acid chain: Nucleotide-binding protein RHA1_ro07174 (304 aa).

24-31 contributes to the ATP binding site; that stretch reads GLSGAGLQ. 75-78 provides a ligand contact to GTP; it reads DVRS.

Belongs to the RapZ-like family.

Its function is as follows. Displays ATPase and GTPase activities. The polypeptide is Nucleotide-binding protein RHA1_ro07174 (Rhodococcus jostii (strain RHA1)).